We begin with the raw amino-acid sequence, 409 residues long: Dihydroorotase (409 aa).

Zn(2+) contacts are provided by His-57 and His-59. Residues 59–61 (HLR) and Asn-91 contribute to the substrate site. Lys-139, His-168, His-208, and Asp-276 together coordinate Zn(2+). Position 139 is an N6-carboxylysine (Lys-139). The active site involves Asp-276. Residues His-280 and 290 to 291 (AG) contribute to the substrate site.

Belongs to the metallo-dependent hydrolases superfamily. DHOase family. Class I DHOase subfamily. The cofactor is Zn(2+).

It catalyses the reaction (S)-dihydroorotate + H2O = N-carbamoyl-L-aspartate + H(+). The protein operates within pyrimidine metabolism; UMP biosynthesis via de novo pathway; (S)-dihydroorotate from bicarbonate: step 3/3. Its function is as follows. Catalyzes the reversible cyclization of carbamoyl aspartate to dihydroorotate. The chain is Dihydroorotase from Thermococcus kodakarensis (strain ATCC BAA-918 / JCM 12380 / KOD1) (Pyrococcus kodakaraensis (strain KOD1)).